The chain runs to 440 residues: ATP-dependent protease ATPase subunit HslU (440 aa).

Residues V18, 60–65 (GVGKTE), D253, E318, and R390 each bind ATP.

Belongs to the ClpX chaperone family. HslU subfamily. In terms of assembly, a double ring-shaped homohexamer of HslV is capped on each side by a ring-shaped HslU homohexamer. The assembly of the HslU/HslV complex is dependent on binding of ATP.

The protein localises to the cytoplasm. Functionally, ATPase subunit of a proteasome-like degradation complex; this subunit has chaperone activity. The binding of ATP and its subsequent hydrolysis by HslU are essential for unfolding of protein substrates subsequently hydrolyzed by HslV. HslU recognizes the N-terminal part of its protein substrates and unfolds these before they are guided to HslV for hydrolysis. The polypeptide is ATP-dependent protease ATPase subunit HslU (Methylococcus capsulatus (strain ATCC 33009 / NCIMB 11132 / Bath)).